We begin with the raw amino-acid sequence, 479 residues long: Glycerol kinase 5 (479 aa).

The ATP site is built by Ser-20 and Ser-21. The glycerol site is built by Arg-90, Asp-267, and Gln-268. ATP-binding residues include Thr-289, Gly-332, and Gly-432.

This sequence belongs to the FGGY kinase family.

The protein resides in the cytoplasm. The catalysed reaction is glycerol + ATP = sn-glycerol 3-phosphate + ADP + H(+). It participates in polyol metabolism; glycerol degradation via glycerol kinase pathway; sn-glycerol 3-phosphate from glycerol: step 1/1. Its function is as follows. Skin-specific kinase that plays a key role in glycerol metabolism, catalyzing its phosphorylation to produce sn-glycerol 3-phosphate. Involved in skin-specific regulation of sterol regulatory element-binding protein (SREBP) processing and lipid biosynthesis. The chain is Glycerol kinase 5 (gk5) from Xenopus laevis (African clawed frog).